The chain runs to 55 residues: Large ribosomal subunit protein uL30 (55 aa).

The protein belongs to the universal ribosomal protein uL30 family. Part of the 50S ribosomal subunit.

Binds the 5S and 23S rRNAs. This Deinococcus radiodurans (strain ATCC 13939 / DSM 20539 / JCM 16871 / CCUG 27074 / LMG 4051 / NBRC 15346 / NCIMB 9279 / VKM B-1422 / R1) protein is Large ribosomal subunit protein uL30.